A 1099-amino-acid polypeptide reads, in one-letter code: ATP-dependent helicase/deoxyribonuclease subunit B (1099 aa).

[4Fe-4S] cluster-binding residues include C766, C1056, C1059, and C1065.

The protein belongs to the helicase family. AddB/RexB type 2 subfamily. Heterodimer of AddA and RexB. Mg(2+) is required as a cofactor. It depends on [4Fe-4S] cluster as a cofactor.

In terms of biological role, the heterodimer acts as both an ATP-dependent DNA helicase and an ATP-dependent, dual-direction single-stranded exonuclease. Recognizes the chi site generating a DNA molecule suitable for the initiation of homologous recombination. This subunit has 5' -&gt; 3' nuclease activity but not helicase activity. This chain is ATP-dependent helicase/deoxyribonuclease subunit B, found in Lactococcus lactis subsp. cremoris (strain SK11).